Reading from the N-terminus, the 347-residue chain is Ribosomal RNA large subunit methyltransferase M (347 aa).

Residues serine 184, 217–220, aspartate 236, aspartate 256, and aspartate 272 each bind S-adenosyl-L-methionine; that span reads APGG. Lysine 301 acts as the Proton acceptor in catalysis.

This sequence belongs to the class I-like SAM-binding methyltransferase superfamily. RNA methyltransferase RlmE family. RlmM subfamily. As to quaternary structure, monomer.

The protein resides in the cytoplasm. The catalysed reaction is cytidine(2498) in 23S rRNA + S-adenosyl-L-methionine = 2'-O-methylcytidine(2498) in 23S rRNA + S-adenosyl-L-homocysteine + H(+). Its function is as follows. Catalyzes the 2'-O-methylation at nucleotide C2498 in 23S rRNA. This Xanthomonas oryzae pv. oryzae (strain PXO99A) protein is Ribosomal RNA large subunit methyltransferase M.